Consider the following 1410-residue polypeptide: DNA-directed RNA polymerase subunit beta' (1410 aa).

Cys70, Cys72, Cys85, and Cys88 together coordinate Zn(2+). Mg(2+)-binding residues include Asp460, Asp462, and Asp464. Cys814, Cys888, Cys895, and Cys898 together coordinate Zn(2+).

The protein belongs to the RNA polymerase beta' chain family. As to quaternary structure, the RNAP catalytic core consists of 2 alpha, 1 beta, 1 beta' and 1 omega subunit. When a sigma factor is associated with the core the holoenzyme is formed, which can initiate transcription. Mg(2+) is required as a cofactor. Zn(2+) serves as cofactor.

It catalyses the reaction RNA(n) + a ribonucleoside 5'-triphosphate = RNA(n+1) + diphosphate. In terms of biological role, DNA-dependent RNA polymerase catalyzes the transcription of DNA into RNA using the four ribonucleoside triphosphates as substrates. This chain is DNA-directed RNA polymerase subunit beta', found in Buchnera aphidicola subsp. Cinara cedri (strain Cc).